The following is a 229-amino-acid chain: Heptahelical transmembrane protein ADIPOR2 (229 aa).

Residues 1–4 (MQGA) are Cytoplasmic-facing. The chain crosses the membrane as a helical span at residues 5–25 (ASHDAAAAAAAAAVLGGGHGV). The Extracellular portion of the chain corresponds to 26-30 (PRWPR). Residues 31–51 (MVFLVGAMTCLAISATAHLLA) form a helical membrane-spanning segment. The Cytoplasmic segment spans residues 52 to 66 (CHSRRASVVFWQLDY). The chain crosses the membrane as a helical span at residues 67 to 87 (AGISAMIVASFVPPVYYAFLC). At 88–92 (HRPAR) the chain is on the extracellular side. Residues 93–113 (VAYLSAISALGALVVGALLSP) form a helical membrane-spanning segment. The Cytoplasmic segment spans residues 114-124 (PCSSPRFRRLR). Residues 125–145 (AALFLAMGLSGVVPALHALWL) traverse the membrane as a helical segment. Residues 146-153 (NWGHAACY) lie on the Extracellular side of the membrane. Residues 154–174 (LALSLEVAMGLAYAAGAWFYV) form a helical membrane-spanning segment. The Cytoplasmic segment spans residues 175–194 (SRVPEKWRPGVFDVVGHSHQ). Residues 195–215 (IFHVLVLVGAVTHYVAVDVLL) traverse the membrane as a helical segment. Residues 216-229 (NWRETVAAACSATS) lie on the Extracellular side of the membrane.

This sequence belongs to the ADIPOR family.

The protein resides in the membrane. May play a role in abiotic stress response. The chain is Heptahelical transmembrane protein ADIPOR2 (ADIPOR2) from Oryza sativa subsp. japonica (Rice).